Here is a 299-residue protein sequence, read N- to C-terminus: Pyridoxal 5'-phosphate synthase subunit PdxS (299 aa).

Residue aspartate 24 coordinates D-ribose 5-phosphate. Residue lysine 81 is the Schiff-base intermediate with D-ribose 5-phosphate of the active site. Residue glycine 153 coordinates D-ribose 5-phosphate. Arginine 165 contacts D-glyceraldehyde 3-phosphate. D-ribose 5-phosphate contacts are provided by residues glycine 219 and 240–241; that span reads GS.

The protein belongs to the PdxS/SNZ family. In terms of assembly, in the presence of PdxT, forms a dodecamer of heterodimers.

The catalysed reaction is aldehydo-D-ribose 5-phosphate + D-glyceraldehyde 3-phosphate + L-glutamine = pyridoxal 5'-phosphate + L-glutamate + phosphate + 3 H2O + H(+). It participates in cofactor biosynthesis; pyridoxal 5'-phosphate biosynthesis. Its function is as follows. Catalyzes the formation of pyridoxal 5'-phosphate from ribose 5-phosphate (RBP), glyceraldehyde 3-phosphate (G3P) and ammonia. The ammonia is provided by the PdxT subunit. Can also use ribulose 5-phosphate and dihydroxyacetone phosphate as substrates, resulting from enzyme-catalyzed isomerization of RBP and G3P, respectively. The chain is Pyridoxal 5'-phosphate synthase subunit PdxS from Methanococcus maripaludis (strain DSM 14266 / JCM 13030 / NBRC 101832 / S2 / LL).